Here is a 239-residue protein sequence, read N- to C-terminus: Metallo-beta-lactamase IND-1 (239 aa).

A signal peptide spans 1-20 (MKKSIRFFIVSILLSPFASA). Zn(2+) contacts are provided by H96, H98, D100, H159, and C178. Residue K181 participates in a beta-lactam binding. Position 220 (H220) interacts with Zn(2+).

It belongs to the metallo-beta-lactamase superfamily. Class-B beta-lactamase family. As to quaternary structure, monomer. The cofactor is Zn(2+).

It is found in the periplasm. It catalyses the reaction a beta-lactam + H2O = a substituted beta-amino acid. With respect to regulation, inhibited by chelating agents such as EDTA. Not susceptible to inactivation by the beta-lactamase-blocking agent clavulanic acid. Functionally, class B beta-lactamase which confers resistance to the beta-lactam antibiotics, including penicillins, cephalosporins and carbapenems. Acts via hydrolysis of the beta-lactam ring. Has penicillin-, cephalosporin- and carbapenem-hydrolyzing activities. The sequence is that of Metallo-beta-lactamase IND-1 from Chryseobacterium indologenes (Flavobacterium indologenes).